Here is a 317-residue protein sequence, read N- to C-terminus: 1-phosphofructokinase (317 aa).

ATP contacts are provided by residues 223–228 (SMGAEG) and 254–255 (GD). The active-site Proton acceptor is the Asp-255.

This sequence belongs to the carbohydrate kinase PfkB family.

It catalyses the reaction beta-D-fructose 1-phosphate + ATP = beta-D-fructose 1,6-bisphosphate + ADP + H(+). In terms of biological role, catalyzes the ATP-dependent phosphorylation of fructose-l-phosphate to fructose-l,6-bisphosphate. In Vibrio cholerae serotype O1 (strain ATCC 39315 / El Tor Inaba N16961), this protein is 1-phosphofructokinase.